The sequence spans 479 residues: ATP synthase subunit beta (479 aa).

153-160 (GGAGVGKT) contributes to the ATP binding site.

It belongs to the ATPase alpha/beta chains family. In terms of assembly, F-type ATPases have 2 components, CF(1) - the catalytic core - and CF(0) - the membrane proton channel. CF(1) has five subunits: alpha(3), beta(3), gamma(1), delta(1), epsilon(1). CF(0) has three main subunits: a(1), b(2) and c(9-12). The alpha and beta chains form an alternating ring which encloses part of the gamma chain. CF(1) is attached to CF(0) by a central stalk formed by the gamma and epsilon chains, while a peripheral stalk is formed by the delta and b chains.

It is found in the cell membrane. The catalysed reaction is ATP + H2O + 4 H(+)(in) = ADP + phosphate + 5 H(+)(out). Its function is as follows. Produces ATP from ADP in the presence of a proton gradient across the membrane. The catalytic sites are hosted primarily by the beta subunits. The sequence is that of ATP synthase subunit beta from Lactobacillus delbrueckii subsp. bulgaricus (strain ATCC 11842 / DSM 20081 / BCRC 10696 / JCM 1002 / NBRC 13953 / NCIMB 11778 / NCTC 12712 / WDCM 00102 / Lb 14).